The sequence spans 905 residues: DNA mismatch repair protein MutS (905 aa).

Positions 272–292 (KKPPLSPPSREATGSTMAIDP) are disordered. 654–661 (GPNMAGKS) serves as a coordination point for ATP.

It belongs to the DNA mismatch repair MutS family.

This protein is involved in the repair of mismatches in DNA. It is possible that it carries out the mismatch recognition step. This protein has a weak ATPase activity. The polypeptide is DNA mismatch repair protein MutS (Rhodopseudomonas palustris (strain BisB18)).